Here is an 873-residue protein sequence, read N- to C-terminus: MELRRSMALPRLLLLGLWAAALRDGAVAAGMKFTGSPIKLKVSQGQPVKLNCSLEGMEDPEMLWIKDGAVVQSVDQVYIPVDEDHWIGFLSLKSVERTDSGKYWCQVENGGKKEESQQVWLIVEGVPYFTVEPEDVSVSPNAPFHMACAAVGPPEPVTIVWWMGDSRVGLPDISPSILNVSGINQSTMFSCEAHNVKGLSSSRTATVQIKAMPLPPLNVTVSQVTSSNASVVWVPGFDGRAPLHSCTLQVAESPDGQEVSTEVAPVPPFAYGVQGLKHSTNYSVRVQCSNEMGSSPFTERVYFQTLELAPSSTPQNIHVIQRDPGLVLEWEGVAPDVLKENVLGYRLEWIQDNVTQGEMIVQDTKANLTTWNPLKDLIIRVCVLNSAGCGPWSDLFLLEAQEVMGGQRQPPYGTSWVPVALGILTALVTAVALALILLRKRRKETRFGHAFGSVVGRGDPAVHFRAARSFNREGPELIEATLESVGISDELKTKLKDVLIQEQQFTLGRMLGKGEFGSVREALLKLDDGSFQKVAVKMLKADIFTSTDIEEFLREAACMKEFDHPHVTKLIGVSLRSRPKGRLPIPMVILPFMKHGDLHAFLLMSRIGENPFNLPLQTLLKFMIDIASGMEYLSSKNFIHRDLAARNCMLDENMNVSVADFGLSKKIYSGDYYRQGCASKLPVKWLALESLADNLYTTHSDVWAFGVTMWEIVTRGQTPYAGIENAEIYNYLISGNRLKQPPECLEDVYDLMCRCWHPEPKLRPSFGVLRSQLEMIRGRMSTLSLSQDPLYVNIGKDKESSVSDPAVHTSFGNTDGDETIAGAAAAAITSDYRYIMSPLCLGDDVEGERHPEGQEGENKSLLYELETEGEKSC.

The N-terminal stretch at 1 to 28 (MELRRSMALPRLLLLGLWAAALRDGAVA) is a signal peptide. 2 consecutive Ig-like C2-type domains span residues 29-116 (AGMK…KEES) and 127-208 (PYFT…ATVQ). The Extracellular portion of the chain corresponds to 29 to 416 (AGMKFTGSPI…QRQPPYGTSW (388 aa)). Asn51 is a glycosylation site (N-linked (GlcNAc...) asparagine). 2 disulfides stabilise this stretch: Cys52-Cys105 and Cys148-Cys191. 7 N-linked (GlcNAc...) asparagine glycosylation sites follow: Asn179, Asn184, Asn218, Asn228, Asn281, Asn353, and Asn367. Fibronectin type-III domains lie at 215 to 308 (PPLN…TLEL) and 310 to 403 (PSST…AQEV). The chain crosses the membrane as a helical span at residues 417-437 (VPVALGILTALVTAVALALIL). Residues 438–873 (LRKRRKETRF…ELETEGEKSC (436 aa)) lie on the Cytoplasmic side of the membrane. The 272-residue stretch at 505 to 776 (FTLGRMLGKG…GVLRSQLEMI (272 aa)) folds into the Protein kinase domain. ATP-binding positions include 511–519 (LGKGEFGSV) and Lys537. Catalysis depends on Asp642, which acts as the Proton acceptor. Residue Tyr673 is modified to Phosphotyrosine; by autocatalysis. A disordered region spans residues 845–873 (VEGERHPEGQEGENKSLLYELETEGEKSC). The span at 847–858 (GERHPEGQEGEN) shows a compositional bias: basic and acidic residues.

Belongs to the protein kinase superfamily. Tyr protein kinase family. AXL/UFO subfamily. In terms of processing, autophosphorylated on tyrosine residues. As to expression, detected in embryonic retina (at protein level). detected in brain, retina, kidney and in retinal Mueller glia-like cells.

The protein localises to the cell membrane. The catalysed reaction is L-tyrosyl-[protein] + ATP = O-phospho-L-tyrosyl-[protein] + ADP + H(+). Receptor tyrosine kinase that transduces signals from the extracellular matrix into the cytoplasm by binding to several ligands. Regulates many physiological processes including cell survival, migration and differentiation. Ligand binding at the cell surface induces dimerization and autophosphorylation of TYRO3 on its intracellular domain that provides docking sites for downstream signaling molecules. Following activation by ligand, enhances PI3-kinase activity and activates the AKT survival pathway, including nuclear translocation of NF-kappa-B and up-regulation of transcription of NF-kappa-B-regulated genes. This is Tyrosine-protein kinase receptor TYRO3 (TYRO3) from Gallus gallus (Chicken).